The primary structure comprises 182 residues: MTRPETIIPEKPTSPYPIHTTAPIISGFGRGSSELGIPTANIPINAQLNSLPTGIYYGWCKIHPVSDQNDETRTRPDGQLILFNHGNKLQANELVVHPMVMSIGWNPFYQNKEKAAEIHIMSKFERDFYGAELEFIVLGYVRPELDYTTKEALIEDILTDIRISRDILENKEEYTKYKKELE.

Mg(2+) is bound by residues Thr39 and Asn41. Residue Glu117 is the Nucleophile of the active site.

Belongs to the flavokinase family. Zn(2+) is required as a cofactor. Mg(2+) serves as cofactor.

It catalyses the reaction riboflavin + ATP = FMN + ADP + H(+). It functions in the pathway cofactor biosynthesis; FMN biosynthesis; FMN from riboflavin (ATP route): step 1/1. Functionally, catalyzes the phosphorylation of riboflavin (vitamin B2) to form flavin mononucleotide (FMN) coenzyme. The protein is Riboflavin kinase (FMN1) of Lodderomyces elongisporus (strain ATCC 11503 / CBS 2605 / JCM 1781 / NBRC 1676 / NRRL YB-4239) (Yeast).